Here is a 207-residue protein sequence, read N- to C-terminus: dTTP/UTP pyrophosphatase (207 aa).

The active-site Proton acceptor is Asp-79.

This sequence belongs to the Maf family. YhdE subfamily. A divalent metal cation serves as cofactor.

The protein resides in the cytoplasm. It carries out the reaction dTTP + H2O = dTMP + diphosphate + H(+). The enzyme catalyses UTP + H2O = UMP + diphosphate + H(+). In terms of biological role, nucleoside triphosphate pyrophosphatase that hydrolyzes dTTP and UTP. May have a dual role in cell division arrest and in preventing the incorporation of modified nucleotides into cellular nucleic acids. The chain is dTTP/UTP pyrophosphatase from Nitrobacter hamburgensis (strain DSM 10229 / NCIMB 13809 / X14).